Here is a 236-residue protein sequence, read N- to C-terminus: 7-cyano-7-deazaguanine synthase (236 aa).

7-17 (CSGGLDSVTLA) contacts ATP. Residues cysteine 185, cysteine 193, cysteine 196, and cysteine 199 each coordinate Zn(2+).

It belongs to the QueC family. Requires Zn(2+) as cofactor.

It carries out the reaction 7-carboxy-7-deazaguanine + NH4(+) + ATP = 7-cyano-7-deazaguanine + ADP + phosphate + H2O + H(+). The protein operates within purine metabolism; 7-cyano-7-deazaguanine biosynthesis. Its function is as follows. Catalyzes the ATP-dependent conversion of 7-carboxy-7-deazaguanine (CDG) to 7-cyano-7-deazaguanine (preQ(0)). The polypeptide is 7-cyano-7-deazaguanine synthase (Rhizobium johnstonii (strain DSM 114642 / LMG 32736 / 3841) (Rhizobium leguminosarum bv. viciae)).